The following is a 322-amino-acid chain: Solute carrier family 35 member B1 (322 aa).

Transmembrane regions (helical) follow at residues 12-32, 51-71, 85-105, 136-156, 168-188, 210-230, 243-263, and 285-305; these read LRLP…GILQ, FALT…KILI, WLYA…NSAL, YPMA…LFMY, TIGY…LTGV, LWST…WEFL, ILLF…TVVY, and VILF…LVFL. The Di-lysine motif motif lies at 318 to 322; the sequence is KKTSH.

The protein belongs to the nucleotide-sugar transporter family. SLC35B subfamily.

It is found in the endoplasmic reticulum membrane. It catalyses the reaction ADP(in) + ATP(out) = ADP(out) + ATP(in). The enzyme catalyses UDP(out) + ATP(in) = UDP(in) + ATP(out). It carries out the reaction UTP(out) + ATP(in) = UTP(in) + ATP(out). The catalysed reaction is dATP(out) + ATP(in) = dATP(in) + ATP(out). In terms of biological role, ATP:ADP antiporter that catalyzes the exchange of ATP and ADP across the endoplasmic reticulum (ER) membrane. Imports ATP from the cytosol to the ER lumen and exports ADP in the opposite direction. Regulates ER energy metabolism and protein biogenesis. Appears to be part of a calcium-dependent ER to cytosol low energy response axis, where calcium efflux from ER to the cytosol triggers ATP import into the ER lumen to maintain sufficient ATP supply. Provides ATP to ER chaperone HSPA5 that drives protein folding and trafficking in the ER. Can transport dATP, UTP or UDP in exchange for ATP, but the physiological relevance of this process remains to be established. The polypeptide is Solute carrier family 35 member B1 (SLC35B1) (Bos taurus (Bovine)).